Consider the following 328-residue polypeptide: Phenylalanine--tRNA ligase alpha subunit (328 aa).

The protein belongs to the class-II aminoacyl-tRNA synthetase family. Phe-tRNA synthetase alpha subunit type 1 subfamily. Tetramer of two alpha and two beta subunits. Requires Mg(2+) as cofactor.

The protein resides in the cytoplasm. It carries out the reaction tRNA(Phe) + L-phenylalanine + ATP = L-phenylalanyl-tRNA(Phe) + AMP + diphosphate + H(+). The protein is Phenylalanine--tRNA ligase alpha subunit of Buchnera aphidicola subsp. Baizongia pistaciae (strain Bp).